The primary structure comprises 242 residues: Glucosamine-6-phosphate deaminase (242 aa).

Residue D71 is the Proton acceptor; for enolization step of the active site. The active-site For ring-opening step is the N142. The Proton acceptor; for ring-opening step role is filled by H144. The active-site For ring-opening step is E149.

Belongs to the glucosamine/galactosamine-6-phosphate isomerase family. NagB subfamily.

The catalysed reaction is alpha-D-glucosamine 6-phosphate + H2O = beta-D-fructose 6-phosphate + NH4(+). It functions in the pathway amino-sugar metabolism; N-acetylneuraminate degradation; D-fructose 6-phosphate from N-acetylneuraminate: step 5/5. Catalyzes the reversible isomerization-deamination of glucosamine 6-phosphate (GlcN6P) to form fructose 6-phosphate (Fru6P) and ammonium ion. The chain is Glucosamine-6-phosphate deaminase from Malacoplasma penetrans (strain HF-2) (Mycoplasma penetrans).